The primary structure comprises 108 residues: Small ribosomal subunit protein bS16 (108 aa).

Positions 82–108 (ESKFSKNTQTENKKPVSKKTTKKSKDN) are disordered. Over residues 96–108 (PVSKKTTKKSKDN) the composition is skewed to basic residues.

This sequence belongs to the bacterial ribosomal protein bS16 family.

This is Small ribosomal subunit protein bS16 from Mycoplasma mycoides subsp. mycoides SC (strain CCUG 32753 / NCTC 10114 / PG1).